Reading from the N-terminus, the 161-residue chain is Early E3 17.7 kDa glycoprotein (161 aa).

Residues N14 and N87 are each glycosylated (N-linked (GlcNAc...) asparagine; by host). Residues 102–129 traverse the membrane as a helical segment; sequence IINPAIFLFLHVLTLVIVLAMAAEVIYN.

Its subcellular location is the host membrane. In Murine adenovirus A serotype 1 (MAdV-1), this protein is Early E3 17.7 kDa glycoprotein.